A 427-amino-acid chain; its full sequence is Putative F-box protein At3g44060 (427 aa).

The region spanning 1 to 46 (MDCLPDDLLVQILYLLPTKEAVSTSVLSKRWRTLFTRSDNLDFHDP) is the F-box domain.

The sequence is that of Putative F-box protein At3g44060 from Arabidopsis thaliana (Mouse-ear cress).